Consider the following 69-residue polypeptide: Small ribosomal subunit protein bS21 (69 aa).

The protein belongs to the bacterial ribosomal protein bS21 family.

The polypeptide is Small ribosomal subunit protein bS21 (Borrelia duttonii (strain Ly)).